We begin with the raw amino-acid sequence, 237 residues long: Concanavalin V (237 aa).

The Mn(2+) site is built by Glu-8 and Asp-10. Asp-10, Tyr-12, Asn-14, and Asp-19 together coordinate Ca(2+). A carbohydrate is bound at residue Asn-14. The Mn(2+) site is built by Asp-19 and His-24. Residues Gly-70, 98 to 100, Asp-208, and Arg-228 each bind a carbohydrate; that span reads GLY.

It belongs to the leguminous lectin family. Homotetramer. In terms of processing, concanavalin A-like lectins of the Diocleinae subtribe undergo proteolytic processing referred to as circular permutation. The propeptide is split into an N-terminal and a C-terminal part, the gamma and beta chain, respectively. These are then religated in beta-gamma order to form the mature alpha chain. The beta and gamma chains can often be detected in cell extracts. Residues 1-118 of the mature chain, as displayed here, probably constitute the beta chain in the propeptide, residues 119-237 the gamma chain.

Its function is as follows. D-mannose/D-glucose-binding lectin which binds alpha-methyl-D-mannoside, D-mannose and D-glucose in that order. Also binds to serum fetuin and ovalbumin. Has hemagglutinating activity towards rabbit erythrocytes. Is not toxic towards larvae of the brine shrimp Artemia. Induces relaxation in rat endothelized aorta. Shows a transient edematogenic effect in rat. This is Concanavalin V from Canavalia cathartica (Jackbean).